The chain runs to 1108 residues: Serine/threonine-protein kinase AKL1 (1108 aa).

S2 bears the N-acetylserine mark. Residue S10 is modified to Phosphoserine. Residues V35 to E319 enclose the Protein kinase domain. Residues L41 to I49 and K70 contribute to the ATP site. D181 acts as the Proton acceptor in catalysis. Residues I405 to I466 are disordered. A Phosphoserine modification is found at S407. A compositionally biased stretch (basic and acidic residues) spans E419–S435. Over residues R436 to N449 the composition is skewed to low complexity. A Phosphothreonine modification is found at T471. Over residues K493–P513 the composition is skewed to polar residues. Residues K493–Y534 form a disordered region. Residue S504 is modified to Phosphoserine. Over residues Q514–Y534 the composition is skewed to low complexity. 2 positions are modified to phosphoserine: S541 and S574. Positions Q590 to Q629 are enriched in low complexity. Disordered stretches follow at residues Q590–G663 and E765–S791. The segment covering N781 to S791 has biased composition (polar residues). Residue S801 is modified to Phosphoserine. The tract at residues A807–N838 is disordered. A compositionally biased stretch (polar residues) spans Q810 to Q819. Position 846 is a phosphoserine (S846). The segment at G858–K1108 is disordered. Residues A859–S872 show a composition bias toward low complexity. Residues D910–R934 are compositionally biased toward basic and acidic residues. The segment covering S935–T976 has biased composition (polar residues). 2 positions are modified to phosphoserine: S953 and S960. The span at E1006–S1048 shows a compositional bias: basic and acidic residues. Residues K1008 and K1046 each participate in a glycyl lysine isopeptide (Lys-Gly) (interchain with G-Cter in ubiquitin) cross-link. At S1048 the chain carries Phosphoserine. Positions N1049–S1060 are enriched in low complexity. Basic and acidic residues predominate over residues Q1071 to A1082. S1072 carries the phosphoserine modification.

This sequence belongs to the protein kinase superfamily. Ser/Thr protein kinase family.

It catalyses the reaction L-seryl-[protein] + ATP = O-phospho-L-seryl-[protein] + ADP + H(+). The enzyme catalyses L-threonyl-[protein] + ATP = O-phospho-L-threonyl-[protein] + ADP + H(+). Phosphorylates SCD5. The chain is Serine/threonine-protein kinase AKL1 (AKL1) from Saccharomyces cerevisiae (strain ATCC 204508 / S288c) (Baker's yeast).